Consider the following 197-residue polypeptide: Dephospho-CoA kinase (197 aa).

The region spanning 5-197 (RLGLTGSIGM…IAHIRETADA (193 aa)) is the DPCK domain. 13–18 (GMGKST) contributes to the ATP binding site.

This sequence belongs to the CoaE family.

It localises to the cytoplasm. It catalyses the reaction 3'-dephospho-CoA + ATP = ADP + CoA + H(+). It participates in cofactor biosynthesis; coenzyme A biosynthesis; CoA from (R)-pantothenate: step 5/5. In terms of biological role, catalyzes the phosphorylation of the 3'-hydroxyl group of dephosphocoenzyme A to form coenzyme A. The polypeptide is Dephospho-CoA kinase (Cereibacter sphaeroides (strain ATCC 17023 / DSM 158 / JCM 6121 / CCUG 31486 / LMG 2827 / NBRC 12203 / NCIMB 8253 / ATH 2.4.1.) (Rhodobacter sphaeroides)).